Consider the following 923-residue polypeptide: Neuropilin-1 (923 aa).

Positions 1–21 (MERGLPLLCAVLALVLAPAGA) are cleaved as a signal peptide. Residues 22–856 (FRNDKCGDTI…PGNVLKTLDP (835 aa)) are Extracellular-facing. 3 disulfides stabilise this stretch: Cys-27-Cys-54, Cys-82-Cys-104, and Cys-147-Cys-173. 2 CUB domains span residues 27 to 141 (CGDT…YEIF) and 147 to 265 (CSQN…YSVL). Asn-150 carries an N-linked (GlcNAc...) asparagine glycan. Residues Glu-195, Asp-209, and Asp-250 each contribute to the Ca(2+) site. Cysteines 206 and 228 form a disulfide. N-linked (GlcNAc...) asparagine glycosylation is found at Asn-261, Asn-300, and Asn-522. Cystine bridges form between Cys-275-Cys-424 and Cys-431-Cys-583. F5/8 type C domains follow at residues 275–424 (CMEA…VYGC) and 431–583 (CSGM…LLGC). Ser-612 is a glycosylation site (O-linked (Xyl...) (chondroitin sulfate) serine; alternate). Ser-612 carries an O-linked (Xyl...) (heparan sulfate) serine; alternate glycan. The MAM domain occupies 645-811 (TYGFNCEFGW…NHISQEDCAK (167 aa)). The disordered stretch occupies residues 820-845 (PEIKIDETGSTPGYEGEGEGDKNISR). The O-linked (Xyl...) (chondroitin sulfate) serine glycan is linked to Ser-829. Asn-842 is a glycosylation site (N-linked (GlcNAc...) asparagine). A helical transmembrane segment spans residues 857-879 (ILITIIAMSALGVLLGAVCGVVL). Residues 880–923 (YCACWHNGMSERNLSALENYNFELVDGVKLKKDKLNTQSTYSEA) are Cytoplasmic-facing. Phosphoserine is present on Ser-894.

Belongs to the neuropilin family. Homodimer, and heterodimer with NRP2. Interacts with FER. Interacts with PLXNB1. Interacts with VEGFA. Interacts with ABCB8/MITOSUR in mitochondria. In terms of assembly, (Microbial infection) Interacts with SARS coronavirus-2/SARS-CoV-2 spike protein S1 (via the CendR motif RRAR). In terms of tissue distribution, the expression of isoforms 1 and 2 does not seem to overlap. Expressed in olfactory epithelium (at protein level). Expressed in fibroblasts (at protein level). Expressed by the blood vessels of different tissues. In the developing embryo it is found predominantly in the nervous system. In adult tissues, it is highly expressed in heart and placenta; moderately in lung, liver, skeletal muscle, kidney and pancreas; and low in adult brain. Expressed in the central nervous system, including olfactory related regions such as the olfactory tubercles and paraolfactory gyri. The expression of isoforms 1 and 2 does not seem to overlap. Found in liver hepatocytes, kidney distal and proximal tubules.

It is found in the secreted. It localises to the mitochondrion membrane. The protein localises to the cell membrane. The protein resides in the cytoplasm. Cell-surface receptor involved in the development of the cardiovascular system, in angiogenesis, in the formation of certain neuronal circuits and in organogenesis outside the nervous system. Mediates the chemorepulsant activity of semaphorins. Recognizes a C-end rule (CendR) motif R/KXXR/K on its ligands which causes cellular internalization and vascular leakage. It binds to semaphorin 3A, the PLGF-2 isoform of PGF, the VEGF165 isoform of VEGFA and VEGFB. Coexpression with KDR results in increased VEGF165 binding to KDR as well as increased chemotaxis. Regulates VEGF-induced angiogenesis. Binding to VEGFA initiates a signaling pathway needed for motor neuron axon guidance and cell body migration, including for the caudal migration of facial motor neurons from rhombomere 4 to rhombomere 6 during embryonic development. Regulates mitochondrial iron transport via interaction with ABCB8/MITOSUR. Its function is as follows. (Microbial infection) Acts as a host factor for human coronavirus SARS-CoV-2 infection. Recognizes and binds to CendR motif RRAR on SARS-CoV-2 spike protein S1 which enhances SARS-CoV-2 infection. In terms of biological role, binds VEGF-165 and may inhibit its binding to cells. May induce apoptosis by sequestering VEGF-165. May bind as well various members of the semaphorin family. Its expression has an averse effect on blood vessel number and integrity. This chain is Neuropilin-1, found in Homo sapiens (Human).